Reading from the N-terminus, the 167-residue chain is Leukotoxin-activating lysine-acyltransferase LktC serotype A1 (167 aa).

Residues histidine 22 and aspartate 91 contribute to the active site.

It belongs to the RTX toxin acyltransferase family.

It is found in the cytoplasm. It carries out the reaction a fatty acyl-[ACP] + L-lysyl-[protein] = N(6)-(fatty acyl)-L-lysyl-[protein] + holo-[ACP] + H(+). In terms of biological role, involved in fatty acylation of the protoxin (LktA) at two internal lysine residues, thereby converting it to the active toxin. The protein is Leukotoxin-activating lysine-acyltransferase LktC serotype A1 (lktC) of Mannheimia haemolytica (Pasteurella haemolytica).